The primary structure comprises 218 residues: uncharacterized protein (218 aa).

Positions 1 to 24 (MAAQPQAPSAGGRPRAGKAVKSVA) are disordered. Residues 28–88 (KLSRESIVEG…AVRIRVIDDI (61 aa)) enclose the HTH tetR-type domain. Residues 51–70 (TINALATQLGTKGPSLYNHV) constitute a DNA-binding region (H-T-H motif). Position 57 is a phosphothreonine; by PknH (Thr57).

In terms of processing, phosphorylated on Thr-57 by PknH.

This is an uncharacterized protein from Mycobacterium tuberculosis (strain ATCC 25618 / H37Rv).